Consider the following 177-residue polypeptide: MCLSHLENMPLSHSRTQGAQRSSWKLWLFCSIVMLLFLCSFSWLIFIFLQLETAKEPCMAKFGPLPSKWQMASSEPPCVNKVSDWKLEILQNGLYLIYGQVAPNANYNDVAPFEVRLYKNKDMIQTLTNKSKIQNVGGTYELHVGDTIDLIFNSEHQVLKNNTYWGIILLANPQFIS.

The Cytoplasmic segment spans residues 1-27 (MCLSHLENMPLSHSRTQGAQRSSWKLW). Residues 28-48 (LFCSIVMLLFLCSFSWLIFIF) traverse the membrane as a helical; Signal-anchor for type II membrane protein segment. The region spanning 47–170 (IFLQLETAKE…NNTYWGIILL (124 aa)) is the THD domain. The Extracellular portion of the chain corresponds to 49–177 (LQLETAKEPC…ILLANPQFIS (129 aa)). The cysteines at positions 58 and 78 are disulfide-linked. Residues asparagine 129 and asparagine 161 are each glycosylated (N-linked (GlcNAc...) asparagine).

This sequence belongs to the tumor necrosis factor family. In terms of assembly, homodimer. Homotrimer. In terms of tissue distribution, expressed at high levels in the small intestine, ovary, testis, kidney and endothelial cells.

The protein resides in the cell membrane. In terms of biological role, cytokine that binds to TNFRSF18/AITR/GITR. Regulates T-cell responses. Can function as costimulator and lower the threshold for T-cell activation and T-cell proliferation. Important for interactions between activated T-lymphocytes and endothelial cells. Mediates activation of NF-kappa-B. Triggers increased phosphorylation of STAT1 and up-regulates expression of VCAM1 and ICAM1. Promotes leukocyte adhesion to endothelial cells. Regulates migration of monocytes from the splenic reservoir to sites of inflammation. This chain is Tumor necrosis factor ligand superfamily member 18, found in Homo sapiens (Human).